A 132-amino-acid polypeptide reads, in one-letter code: Protein MrkF (132 aa).

The protein resides in the fimbrium. In terms of biological role, appears to affect the stability of the intact fimbriae on the cell surface. This is Protein MrkF (mrkF) from Klebsiella pneumoniae.